The following is a 131-amino-acid chain: Small ribosomal subunit protein uS8 (131 aa).

The protein belongs to the universal ribosomal protein uS8 family. As to quaternary structure, part of the 30S ribosomal subunit. Contacts proteins S5 and S12.

Its function is as follows. One of the primary rRNA binding proteins, it binds directly to 16S rRNA central domain where it helps coordinate assembly of the platform of the 30S subunit. The sequence is that of Small ribosomal subunit protein uS8 from Dictyoglomus thermophilum (strain ATCC 35947 / DSM 3960 / H-6-12).